Consider the following 798-residue polypeptide: Nuclear cap-binding protein subunit 1 (798 aa).

An MIF4G domain is found at 28-241; the sequence is EKKLQGVIGK…SLSAQIEALR (214 aa). The tract at residues 663–686 is disordered; the sequence is NKIKEEDDEESDIKMDEDETKEEK. Residues 668 to 682 are compositionally biased toward acidic residues; the sequence is EDDEESDIKMDEDET.

The protein belongs to the NCBP1 family. As to quaternary structure, component of the nuclear cap-binding complex (CBC), a heterodimer composed of ncbp-1 and ncbp-1 that interacts with m7GpppG-capped RNA.

It is found in the nucleus. Its function is as follows. Component of the cap-binding complex (CBC), which binds cotranscriptionally to the 5'-cap of pre-mRNAs and is involved in various processes such as pre-mRNA splicing and RNA-mediated gene silencing (RNAi). The CBC complex is involved in miRNA-mediated RNA interference and is required for primary microRNAs (miRNAs) processing. In the CBC complex, ncbp-1 does not bind directly capped RNAs (m7GpppG-capped RNA) but is required to stabilize the movement of the N-terminal loop of ncbp-2 and lock the CBC into a high affinity cap-binding state with the cap structure. This is Nuclear cap-binding protein subunit 1 (ncbp-1) from Caenorhabditis elegans.